The chain runs to 243 residues: 23S rRNA (guanosine-2'-O-)-methyltransferase RlmB (243 aa).

Residues glycine 196, isoleucine 216, and leucine 225 each coordinate S-adenosyl-L-methionine.

It belongs to the class IV-like SAM-binding methyltransferase superfamily. RNA methyltransferase TrmH family. RlmB subfamily. As to quaternary structure, homodimer.

The protein resides in the cytoplasm. The catalysed reaction is guanosine(2251) in 23S rRNA + S-adenosyl-L-methionine = 2'-O-methylguanosine(2251) in 23S rRNA + S-adenosyl-L-homocysteine + H(+). Functionally, specifically methylates the ribose of guanosine 2251 in 23S rRNA. The polypeptide is 23S rRNA (guanosine-2'-O-)-methyltransferase RlmB (Salmonella typhi).